Here is a 103-residue protein sequence, read N- to C-terminus: Large ribosomal subunit protein bL21 (103 aa).

Belongs to the bacterial ribosomal protein bL21 family. In terms of assembly, part of the 50S ribosomal subunit. Contacts protein L20.

Its function is as follows. This protein binds to 23S rRNA in the presence of protein L20. The protein is Large ribosomal subunit protein bL21 of Teredinibacter turnerae (strain ATCC 39867 / T7901).